The following is a 712-amino-acid chain: Protein phosphatase 1 regulatory subunit 37 (712 aa).

The segment covering 1–12 (MEIPPQEAPPGP) has biased composition (pro residues). The tract at residues 1–47 (MEIPPQEAPPGPGADADADAEAETEEASAEAESPTGTSPPADGRLKA) is disordered. A compositionally biased stretch (acidic residues) spans 16 to 29 (ADADAEAETEEASA). 2 positions are modified to phosphoserine: S56 and S62. 5 LRR repeats span residues 226-246 (SLAVLHLENASLSGRPLMLLA), 254-275 (NLRELYLADNKLNGLQDSAQLG), 283-303 (SLQILDLRNNHVLDSGLAYIC), 312-332 (GLVTLVLWNNQLTHTGMAFLG), and 340-360 (SLETLNLGHNPIGNEGVRNLK). The disordered stretch occupies residues 492–680 (ESGELPAVGS…PPGLEAKGGS (189 aa)). A compositionally biased stretch (acidic residues) spans 514–531 (SDSDSDSDREEQEEEEED). Phosphoserine is present on S583. Residues 605–626 (PPVPPTFVSSPPPSPPSPPASP) are compositionally biased toward pro residues. A compositionally biased stretch (polar residues) spans 639 to 651 (SEAQPQLEPSQAG).

Belongs to the PPP1R37 family. Interacts with PPP1CA.

Its function is as follows. Inhibits phosphatase activity of protein phosphatase 1 (PP1) complexes. In Mus musculus (Mouse), this protein is Protein phosphatase 1 regulatory subunit 37 (Ppp1r37).